The sequence spans 290 residues: Transcription cofactor vestigial-like protein 4 (290 aa).

Residue M1 is modified to N-acetylmethionine. Basic and acidic residues predominate over residues 17–30 (ADDEKREAALRGEP). Disordered stretches follow at residues 17–65 (ADDE…PGDE), 85–106 (LNKT…SPIE), 140–161 (LDAS…QQNR), and 254–290 (AAKD…SVVS). S52 carries the phosphoserine modification. Basic and acidic residues predominate over residues 92-105 (DCRRDPRERSRSPI). S149 is subject to Phosphoserine. The span at 150 to 161 (PTLTPGERQQNR) shows a compositional bias: polar residues. The residue at position 153 (T153) is a Phosphothreonine. The span at 272–290 (PASPSAHMVSHSHSPSVVS) shows a compositional bias: low complexity. At S274 the chain carries Phosphoserine.

The protein belongs to the vestigial family. Interacts with TEFs. Interacts with IRF2BP2.

It localises to the nucleus. May act as a specific coactivator for the mammalian TEFs. The protein is Transcription cofactor vestigial-like protein 4 of Homo sapiens (Human).